Reading from the N-terminus, the 550-residue chain is Complement control protein (550 aa).

The first 19 residues, 1–19, serve as a signal peptide directing secretion; that stretch reads MAFLRQTLWILWTFTMVIG. Sushi domains lie at 23-83, 84-150, 151-209, and 210-268; these read EKCS…TCNK, KSCP…FCEK, EKCH…TCEL, and AGCK…KCVL. Disulfide bonds link cysteine 25/cysteine 68, cysteine 53/cysteine 81, cysteine 86/cysteine 131, cysteine 116/cysteine 148, cysteine 153/cysteine 194, cysteine 180/cysteine 207, cysteine 212/cysteine 254, and cysteine 240/cysteine 266. N-linked (GlcNAc...) asparagine; by host glycosylation is found at asparagine 63 and asparagine 111. The N-linked (GlcNAc...) asparagine; by host glycan is linked to asparagine 197. N-linked (GlcNAc...) asparagine; by host glycans are attached at residues asparagine 255, asparagine 275, and asparagine 299. The disordered stretch occupies residues 269–338; sequence EDIDDPNNSN…TSEGFNETTT (70 aa). Polar residues-rich tracts occupy residues 288-302 and 312-321; these read EKPN…NYTE and TAATCDTNCE. Residues asparagine 334, asparagine 371, asparagine 374, and asparagine 378 are each glycosylated (N-linked (GlcNAc...) asparagine; by host). Disordered stretches follow at residues 387-408 and 420-516; these read TPTS…NYNT and IEEG…RPPA. Polar residues predominate over residues 424–440; that stretch reads PSNSTTSEKATASTLSH. N-linked (GlcNAc...) asparagine; by host glycans are attached at residues asparagine 426, asparagine 445, asparagine 455, and asparagine 483. A compositionally biased stretch (polar residues) spans 450-476; sequence IYTTLNKTTQLPSTNKPTNSQAKSSTK. The segment covering 484–495 has biased composition (polar residues); sequence KTTSNPAISLTD. Residues 528 to 548 traverse the membrane as a helical segment; sequence IGLLTAVALTCGLITLFHYLF.

It is found in the host membrane. Its subcellular location is the virion membrane. Inhibits the complement component of the host innate immune response. Regulates host C3 convertases, accelerating their decay, and acts as a cofactor for factor I degradation of C4b and C3b. Also binds heparin, and therefore may play two distinct roles when incorporated in virion membranes: immune evasion and host cell binding. This is Complement control protein (ORF4) from Human herpesvirus 8 type P (isolate GK18) (HHV-8).